The primary structure comprises 320 residues: Integrin-binding sialoprotein (320 aa).

The N-terminal stretch at 1 to 16 (MKTALILLCILGMASA) is a signal peptide. A phosphoserine mark is found at serine 31, serine 68, serine 76, serine 77, and serine 96. Disordered stretches follow at residues 60–117 (PVQG…VTAS), 136–225 (LPKK…RELT), and 238–264 (FQQT…VEYG). Positions 67–106 (SSEENGDGDSSEEEGEEEETSNEEENNEDSEGNEDQEAEA) are enriched in acidic residues. The N-linked (GlcNAc...) asparagine glycan is linked to asparagine 108. Residues 139–152 (KAGDAEGKAPKMKE) show a composition bias toward basic and acidic residues. Serine 153 carries the post-translational modification Phosphoserine. A compositionally biased stretch (acidic residues) spans 153-176 (SDEEEEEEEEEENENEEAEVDENE). 2 stretches are compositionally biased toward polar residues: residues 177–188 (QVVNGTSTNSTE) and 249–261 (GTTS…SSTV). 2 N-linked (GlcNAc...) asparagine glycosylation sites follow: asparagine 180 and asparagine 185. An Integrin-binding motif motif is present at residues 289–291 (RGD). Residues tyrosine 316 and tyrosine 317 each carry the sulfotyrosine modification.

As to quaternary structure, monomer. Interacts with integrins; the interaction promotes cell adhesion.

It localises to the secreted. Its function is as follows. Binds tightly to hydroxyapatite. Appears to form an integral part of the mineralized matrix. Probably important to cell-matrix interaction. Promotes adhesion and migration of various cells via the alpha-V/beta-3 integrin receptor (ITGAV:ITGB3). The polypeptide is Integrin-binding sialoprotein (Ibsp) (Rattus norvegicus (Rat)).